Reading from the N-terminus, the 394-residue chain is MAKAKFERKKPHVNVGTIGHVDHGKTTLTAAISAVLSKTYGGEVRNFAQIDNAPEERERGITINTSHIEYDTPSRHYAHVDCPGHADYVKNMITGAAQMDGAILVVAATDGPMPQTREHILLSRQVGVPFIIVFMNKCDMVDDEELLELVEMEVRELLSEYDFPGDDLPVIQGSALKALEGQPEWEAKILELAEALDTYIPEPERDIDKPFLLPIEDVFSISGRGTVVTGRVERGIVRVGDEVEIVGVKATTKTTCTGVEMFRKLLDEGRAGENCGVLLRGTKRDDVERGQVLAKPASINPHTTFESEVYVLSKEEGGRHTPFFKGYRPQFYFRTTDVTGTIELPEGVEMVMPGDNIKMVVTLIYPIAMDDGLRFAIREGGRTVGAGVVAKIIA.

The 195-residue stretch at 10-204 (KPHVNVGTIG…ALDTYIPEPE (195 aa)) folds into the tr-type G domain. The tract at residues 19-26 (GHVDHGKT) is G1. 19 to 26 (GHVDHGKT) lines the GTP pocket. Thr26 provides a ligand contact to Mg(2+). Residues 60-64 (GITIN) form a G2 region. The tract at residues 81–84 (DCPG) is G3. GTP contacts are provided by residues 81–85 (DCPGH) and 136–139 (NKCD). A G4 region spans residues 136 to 139 (NKCD). Residues 174–176 (SAL) form a G5 region.

This sequence belongs to the TRAFAC class translation factor GTPase superfamily. Classic translation factor GTPase family. EF-Tu/EF-1A subfamily. In terms of assembly, monomer.

The protein localises to the cytoplasm. It carries out the reaction GTP + H2O = GDP + phosphate + H(+). GTP hydrolase that promotes the GTP-dependent binding of aminoacyl-tRNA to the A-site of ribosomes during protein biosynthesis. The chain is Elongation factor Tu from Shewanella denitrificans (strain OS217 / ATCC BAA-1090 / DSM 15013).